The chain runs to 444 residues: Phosphoribosylamine--glycine ligase (444 aa).

Residues 109 to 324 form the ATP-grasp domain; sequence RNLFKKYEID…FLDVCFAIAE (216 aa). Residue 140-202 participates in ATP binding; it reads MTSLGKDVVV…EEKLVGVEFT (63 aa). Gln282, Glu294, and Asn296 together coordinate Mg(2+). Gln282, Glu294, and Asn296 together coordinate Mn(2+).

The protein belongs to the GARS family. Requires Mg(2+) as cofactor. Mn(2+) serves as cofactor.

It carries out the reaction 5-phospho-beta-D-ribosylamine + glycine + ATP = N(1)-(5-phospho-beta-D-ribosyl)glycinamide + ADP + phosphate + H(+). Its pathway is purine metabolism; IMP biosynthesis via de novo pathway; N(1)-(5-phospho-D-ribosyl)glycinamide from 5-phospho-alpha-D-ribose 1-diphosphate: step 2/2. The protein is Phosphoribosylamine--glycine ligase of Methanococcus maripaludis (strain DSM 14266 / JCM 13030 / NBRC 101832 / S2 / LL).